Here is a 248-residue protein sequence, read N- to C-terminus: 3,4-dihydroxyphthalate decarboxylase (248 aa).

The active-site Proton donor/acceptor is the Glu-90. 4 residues coordinate a divalent metal cation: Glu-90, His-109, His-111, and His-177.

The protein belongs to the aldolase class II family. Requires a divalent metal cation as cofactor.

It carries out the reaction 3,4-dihydroxyphthalate + H(+) = 3,4-dihydroxybenzoate + CO2. It participates in xenobiotic degradation; phthalate degradation. In terms of biological role, catalyzes the decarboxylation of 3,4-dihydroxyphthalate to protocatechuate (3,4-dihydroxybenzoate) during phthalate metabolism. This is 3,4-dihydroxyphthalate decarboxylase from Arthrobacter keyseri.